A 447-amino-acid polypeptide reads, in one-letter code: MKFDKILIANRGEIALRILRACEEMGIATIAVHSTVDRNALHVQLADEAVCIGEPASAKSYLNIPNIIAAALTRNASAIHPGYGFLSENAKFAEICADHHIAFIGPTPEAIRLMGDKSTAKETMQKAGVPTVPGSEGLVETEQEGLELAKDIGYPVMIKATAGGGGRGMRLVRSPDEFVKLFLAAQGEAGAAFGNAGVYIEKFIERPRHIEFQILADNYGNVIHLGERDCSIQRRNQKLLEEAPSPALDSDLREKMGQAAVKAAQFINYTGAGTIEFLLDRSGQFYFMEMNTRIQVEHPVTEMVTGVDLLVEQIRIAQGERLRLTQDQVVLRGHAIECRINAEDPDHDFRPAPGRISGYLPPGGPGVRIDSHVYTDYQIPPYYDSLIGKLIVWGPDRATAINRMKRALRECAITGLPTTIGFHQRIMENPQFLQGNVSTSFVQEMNK.

The 447-residue stretch at 1 to 447 folds into the Biotin carboxylation domain; it reads MKFDKILIAN…STSFVQEMNK (447 aa). Residues Lys-117, Lys-159, 165 to 166, 201 to 204, and His-209 contribute to the ATP site; these read GG and EKFI. The ATP-grasp domain maps to 121-318; it reads KETMQKAGVP…LLVEQIRIAQ (198 aa). Residue Lys-238 participates in hydrogencarbonate binding. Glu-276 and Glu-289 together coordinate ATP. Residues Glu-276, Glu-289, and Asn-291 each coordinate Mg(2+). 3 residues coordinate Mn(2+): Glu-276, Glu-289, and Asn-291. Residues Arg-293, Val-296, and Arg-339 each contribute to the hydrogencarbonate site. The active site involves Arg-293. Arg-339 provides a ligand contact to biotin.

In terms of assembly, acetyl-CoA carboxylase is a heterohexamer of biotin carboxyl carrier protein, biotin carboxylase and the two subunits of carboxyl transferase in a 2:2 complex. Mg(2+) serves as cofactor. It depends on Mn(2+) as a cofactor.

The enzyme catalyses N(6)-biotinyl-L-lysyl-[protein] + hydrogencarbonate + ATP = N(6)-carboxybiotinyl-L-lysyl-[protein] + ADP + phosphate + H(+). The protein operates within lipid metabolism; malonyl-CoA biosynthesis; malonyl-CoA from acetyl-CoA: step 1/1. In terms of biological role, this protein is a component of the acetyl coenzyme A carboxylase complex; first, biotin carboxylase catalyzes the carboxylation of the carrier protein and then the transcarboxylase transfers the carboxyl group to form malonyl-CoA. This chain is Biotin carboxylase (accC), found in Nostoc sp. (strain PCC 7120 / SAG 25.82 / UTEX 2576).